The chain runs to 369 residues: Histidinol-phosphate aminotransferase (369 aa).

Lysine 223 carries the N6-(pyridoxal phosphate)lysine modification.

Belongs to the class-II pyridoxal-phosphate-dependent aminotransferase family. Histidinol-phosphate aminotransferase subfamily. Homodimer. Pyridoxal 5'-phosphate is required as a cofactor.

The catalysed reaction is L-histidinol phosphate + 2-oxoglutarate = 3-(imidazol-4-yl)-2-oxopropyl phosphate + L-glutamate. It participates in amino-acid biosynthesis; L-histidine biosynthesis; L-histidine from 5-phospho-alpha-D-ribose 1-diphosphate: step 7/9. Functionally, catalyzes the conversion of imidazole acetol phosphate to histidinol phosphate. Can also transaminate aromatic amino acids and histidine in addition to histidinol phosphate. This chain is Histidinol-phosphate aminotransferase, found in Zymomonas mobilis subsp. mobilis (strain ATCC 31821 / ZM4 / CP4).